A 488-amino-acid chain; its full sequence is DNA polymerase processivity factor (488 aa).

Disordered stretches follow at residues 1-26, 331-453, and 469-488; these read MTDSPGGVAPASPVEDASDASLGQPE, SPSA…RSGS, and PGAFSAFRGGPQTPYGFGFP. Residues 331 to 344 are compositionally biased toward low complexity; sequence SPSAGSSASRASGS. The segment covering 345–355 has biased composition (polar residues); sequence EPTDSQDSASD. A compositionally biased stretch (low complexity) spans 368–379; it reads AARAGEAGALHA. Residues 383–393 show a composition bias toward polar residues; the sequence is PSSTTRVTPTT. The Bipartite nuclear localization signal signature appears at 394–413; that stretch reads KRGRSGGEDARADTALKKPK. Residues 398–409 show a composition bias toward basic and acidic residues; it reads SGGEDARADTAL. Over residues 437 to 453 the composition is skewed to low complexity; that stretch reads ADGTAARPAAPDARSGS.

This sequence belongs to the herpesviridae DNA polymerase processivity factor family. As to quaternary structure, interacts with the DNA polymerase catalytic subunit UL30. Interacts with the origin-binding protein.

It is found in the host nucleus. Functionally, plays an essential role in viral DNA replication by acting as the polymerase accessory subunit. Associates with the viral polymerase to increase its processivity and forms high-affinity direct interactions with DNA. Facilitates the origin-binding protein UL9 loading onto DNA thus increasing its ability to assemble into a functional complex capable of unwinding duplex DNA. The protein is DNA polymerase processivity factor of Homo sapiens (Human).